The following is a 57-amino-acid chain: Aminopeptidase A (57 aa).

The Extracellular segment spans residues 1-57 (YLTDHYFKVDLNSTVTQQRFLLDPSELAGITIMQPSDSNIEWLKQYRDDVATWLENS). A glycan (N-linked (GlcNAc...) asparagine) is linked at Asn-12.

This sequence belongs to the peptidase M1 family. As to quaternary structure, homodimer; disulfide-linked. Zn(2+) serves as cofactor.

The protein resides in the cell membrane. It catalyses the reaction Release of N-terminal glutamate (and to a lesser extent aspartate) from a peptide.. Inhibited by the aminopeptidase competitive inhibitors amastatin (Leu and acidic inhibitor), and bestatin (Leu inhibitor), by chelating agents EDTA, and 1,10-Phenanthroline, as well as by Zn(2+) ions. Substrate specificity is modulated by Ca(2+), Ba(2+), and Mn(2+) ions which enhances the enzymatic activity for cleavage of acidic residues. Its function is as follows. Venom protein that cleaves N-terminal acidic residues from peptides with high potency in presence of calcium. It may have several roles in venom including alteration of blood pressure by cleaving circulating angiotensin-2, general degradation of host tissue, increase of permeability to other venom components, and/or processing of other toxins in the venom. The chain is Aminopeptidase A from Gloydius blomhoffii (Mamushi).